The following is a 283-amino-acid chain: Pantothenate synthetase (283 aa).

Position 30 to 37 (30 to 37) interacts with ATP; sequence MGNLHDGH. His-37 functions as the Proton donor in the catalytic mechanism. Gln-61 is a binding site for (R)-pantoate. Gln-61 is a binding site for beta-alanine. 149–152 contributes to the ATP binding site; sequence GEKD. Residue Gln-155 coordinates (R)-pantoate. An ATP-binding site is contributed by 186–189; it reads LSSR.

Belongs to the pantothenate synthetase family. In terms of assembly, homodimer.

It is found in the cytoplasm. It catalyses the reaction (R)-pantoate + beta-alanine + ATP = (R)-pantothenate + AMP + diphosphate + H(+). Its pathway is cofactor biosynthesis; (R)-pantothenate biosynthesis; (R)-pantothenate from (R)-pantoate and beta-alanine: step 1/1. Functionally, catalyzes the condensation of pantoate with beta-alanine in an ATP-dependent reaction via a pantoyl-adenylate intermediate. This chain is Pantothenate synthetase, found in Shigella dysenteriae serotype 1 (strain Sd197).